The sequence spans 546 residues: Membrane protein insertase YidC (546 aa).

A helical membrane pass occupies residues 6-26 (LILFIVFSFSLLLLWEAWQDK). The tract at residues 31 to 56 (PATRPVAGAPAGSAAPTPSTALNAPA) is disordered. The span at 37–56 (AGAPAGSAAPTPSTALNAPA) shows a compositional bias: low complexity. 4 helical membrane passes run 351-371 (LVGN…LALY), 425-445 (LPIL…LAAV), 465-482 (WYIL…QVKL), and 494-514 (IMMI…AGLV).

The protein belongs to the OXA1/ALB3/YidC family. Type 1 subfamily. Interacts with the Sec translocase complex via SecD. Specifically interacts with transmembrane segments of nascent integral membrane proteins during membrane integration.

The protein resides in the cell inner membrane. Its function is as follows. Required for the insertion and/or proper folding and/or complex formation of integral membrane proteins into the membrane. Involved in integration of membrane proteins that insert both dependently and independently of the Sec translocase complex, as well as at least some lipoproteins. Aids folding of multispanning membrane proteins. The chain is Membrane protein insertase YidC from Thiobacillus denitrificans (strain ATCC 25259 / T1).